A 293-amino-acid chain; its full sequence is Ribonuclease P/MRP protein subunit RPP1 (293 aa).

It belongs to the eukaryotic/archaeal RNase P protein component 3 family. As to quaternary structure, component of nuclear RNase P and RNase MRP complexes. RNase P consists of an RNA moiety and at least 9 protein subunits including POP1, POP3, POP4, POP5, POP6, POP7, POP8, RPP1 and RPR2. RNase MRP complex consists of an RNA moiety and at least 10 protein subunits including POP1, POP3, POP4, POP5, POP6, POP7, POP8, RMP1, RPP1 and SNM1, many of which are shared with the RNase P complex.

The protein resides in the nucleus. It catalyses the reaction Endonucleolytic cleavage of RNA, removing 5'-extranucleotides from tRNA precursor.. Functionally, component of ribonuclease P, a protein complex that generates mature tRNA molecules by cleaving their 5'-ends. Also a component of RNase MRP, which cleaves pre-rRNA sequences. The sequence is that of Ribonuclease P/MRP protein subunit RPP1 (RPP1) from Saccharomyces cerevisiae (strain ATCC 204508 / S288c) (Baker's yeast).